The chain runs to 268 residues: Photosystem II 22 kDa protein 1, chloroplastic (268 aa).

The N-terminal 60 residues, 1-60, are a transit peptide targeting the chloroplast; sequence MAQSMLVSGANGTVAAASTSRLQPVRPTPFSRLVLSQPSSSLGRAVSVKTVALFGRSKTK. 2 consecutive repeat copies span residues 54 to 161 and 164 to 268. Helical transmembrane passes span 99–119, 133–153, 199–219, and 234–254; these read VAML…KGIL, AEPL…GALG, LFVG…EIIT, and PINE…IAAI.

This sequence belongs to the ELIP/psbS family. As to expression, expressed at low levels in leaves (at protein level).

Its subcellular location is the plastid. The protein resides in the chloroplast thylakoid membrane. Its function is as follows. Involved in high light-mediated energy-dependent nonphotochemical quenching (NPQ, qE) and thermal dissipation (TD) thus regulating energy conversion in photosystem II and protecting from photoinhibition. Also seems to regulate quantum yield of electron transport in fluctuating light conditions. The chain is Photosystem II 22 kDa protein 1, chloroplastic from Oryza sativa subsp. indica (Rice).